The chain runs to 682 residues: Amphiphysin (682 aa).

Coiled coils occupy residues 10–84 (AKNV…LHEV) and 144–191 (DYDS…QEEL). A BAR domain is found at 24 to 240 (VLQKLGKADE…MTKLGDQHAD (217 aa)). Disordered regions lie at residues 244–310 (TIQG…PKLT), 446–470 (ILAE…ETTG), 501–530 (GAVR…QEKV), and 561–606 (AAAE…ASDM). Pro residues predominate over residues 261 to 274 (PSPPEEVSPLPSPT). Residues 503–527 (VRTEQEAAAEGDKPQGEEKDVDVSQ) are compositionally biased toward basic and acidic residues. Polar residues predominate over residues 567 to 596 (TQGTDSETSQIGSEQKATEEIQTTPSQDQP). Positions 609–682 (GFLFKVEVLH…FPENFTRHLE (74 aa)) constitute an SH3 domain.

In terms of assembly, heterodimer with BIN1. Binds SH3GLB1. As to expression, is abundant in the forebrain and cerebellum. It is also found in the adrenal gland, anterior and posterior pituitary.

The protein localises to the cytoplasmic vesicle. It localises to the secretory vesicle. It is found in the synaptic vesicle membrane. Its subcellular location is the cytoplasm. The protein resides in the cytoskeleton. Its function is as follows. May participate in mechanisms of regulated exocytosis in synapses and certain endocrine cell types. May control the properties of the membrane associated cytoskeleton. The chain is Amphiphysin (AMPH) from Gallus gallus (Chicken).